Here is a 101-residue protein sequence, read N- to C-terminus: Small ribosomal subunit protein bS6 (101 aa).

Belongs to the bacterial ribosomal protein bS6 family.

Functionally, binds together with bS18 to 16S ribosomal RNA. This is Small ribosomal subunit protein bS6 from Micrococcus luteus (strain ATCC 4698 / DSM 20030 / JCM 1464 / CCM 169 / CCUG 5858 / IAM 1056 / NBRC 3333 / NCIMB 9278 / NCTC 2665 / VKM Ac-2230) (Micrococcus lysodeikticus).